Consider the following 119-residue polypeptide: Large ribosomal subunit protein bL20 (119 aa).

The protein belongs to the bacterial ribosomal protein bL20 family.

Functionally, binds directly to 23S ribosomal RNA and is necessary for the in vitro assembly process of the 50S ribosomal subunit. It is not involved in the protein synthesizing functions of that subunit. This Bordetella bronchiseptica (strain ATCC BAA-588 / NCTC 13252 / RB50) (Alcaligenes bronchisepticus) protein is Large ribosomal subunit protein bL20.